We begin with the raw amino-acid sequence, 698 residues long: Polyphosphate kinase 1 (698 aa).

Asn46 contributes to the ATP binding site. Mg(2+)-binding residues include Arg377 and Arg407. His437 (phosphohistidine intermediate) is an active-site residue. 3 residues coordinate ATP: Tyr470, Arg566, and His594.

This sequence belongs to the polyphosphate kinase 1 (PPK1) family. Requires Mg(2+) as cofactor. An intermediate of this reaction is the autophosphorylated ppk in which a phosphate is covalently linked to a histidine residue through a N-P bond.

It catalyses the reaction [phosphate](n) + ATP = [phosphate](n+1) + ADP. Functionally, catalyzes the reversible transfer of the terminal phosphate of ATP to form a long-chain polyphosphate (polyP). The chain is Polyphosphate kinase 1 from Chlorobaculum tepidum (strain ATCC 49652 / DSM 12025 / NBRC 103806 / TLS) (Chlorobium tepidum).